The primary structure comprises 121 residues: MATKMVIVVRTDLDMGKGKIAAQVAHAAVSLVLDILNSSNSLWKEWLYKWLEEGQPKIVVKVPSLDELNKRYEKAIELNLPTTIIQDAGKTQIEPGTITCIGIGPAPVELVDKITGDLKLL.

Belongs to the PTH2 family.

The protein resides in the cytoplasm. The catalysed reaction is an N-acyl-L-alpha-aminoacyl-tRNA + H2O = an N-acyl-L-amino acid + a tRNA + H(+). The natural substrate for this enzyme may be peptidyl-tRNAs which drop off the ribosome during protein synthesis. This Sulfurisphaera tokodaii (strain DSM 16993 / JCM 10545 / NBRC 100140 / 7) (Sulfolobus tokodaii) protein is Peptidyl-tRNA hydrolase.